Reading from the N-terminus, the 241-residue chain is Uridylate kinase (241 aa).

ATP is bound at residue 12 to 15; that stretch reads KLSG. Gly-54 lines the UMP pocket. The ATP site is built by Gly-55 and Arg-59. Residues Asp-74 and 135–142 each bind UMP; that span reads TGNPFFTT. ATP is bound by residues Thr-162, Tyr-168, and Asp-171.

It belongs to the UMP kinase family. In terms of assembly, homohexamer.

It is found in the cytoplasm. It carries out the reaction UMP + ATP = UDP + ADP. The protein operates within pyrimidine metabolism; CTP biosynthesis via de novo pathway; UDP from UMP (UMPK route): step 1/1. With respect to regulation, inhibited by UTP. Its function is as follows. Catalyzes the reversible phosphorylation of UMP to UDP. The protein is Uridylate kinase of Magnetococcus marinus (strain ATCC BAA-1437 / JCM 17883 / MC-1).